Here is a 319-residue protein sequence, read N- to C-terminus: Quinolinate synthase (319 aa).

The iminosuccinate site is built by His35 and Ser52. A [4Fe-4S] cluster-binding site is contributed by Cys97. Residues 123-125 and Ser140 each bind iminosuccinate; that span reads YIN. Cys183 is a binding site for [4Fe-4S] cluster. Iminosuccinate contacts are provided by residues 209-211 and Thr226; that span reads HPE. Cys276 is a [4Fe-4S] cluster binding site.

It belongs to the quinolinate synthase family. Type 2 subfamily. Requires [4Fe-4S] cluster as cofactor.

Its subcellular location is the cytoplasm. It carries out the reaction iminosuccinate + dihydroxyacetone phosphate = quinolinate + phosphate + 2 H2O + H(+). It participates in cofactor biosynthesis; NAD(+) biosynthesis; quinolinate from iminoaspartate: step 1/1. In terms of biological role, catalyzes the condensation of iminoaspartate with dihydroxyacetone phosphate to form quinolinate. This is Quinolinate synthase from Microcystis aeruginosa (strain NIES-843 / IAM M-2473).